We begin with the raw amino-acid sequence, 406 residues long: Argininosuccinate synthase (406 aa).

ATP-binding positions include 10–18 (AYSGGLDTS) and A37. Residues Y88 and S93 each contribute to the L-citrulline site. G118 contributes to the ATP binding site. T120, N124, and D125 together coordinate L-aspartate. An L-citrulline-binding site is contributed by N124. The L-citrulline site is built by R128, S179, S188, E264, and Y276.

Belongs to the argininosuccinate synthase family. Type 1 subfamily. Homotetramer.

The protein localises to the cytoplasm. It carries out the reaction L-citrulline + L-aspartate + ATP = 2-(N(omega)-L-arginino)succinate + AMP + diphosphate + H(+). It participates in amino-acid biosynthesis; L-arginine biosynthesis; L-arginine from L-ornithine and carbamoyl phosphate: step 2/3. The polypeptide is Argininosuccinate synthase (Azotobacter vinelandii (strain DJ / ATCC BAA-1303)).